An 82-amino-acid polypeptide reads, in one-letter code: Large ribosomal subunit protein bL27 (82 aa).

Residues 1–54 (MAHKKGQGASRNGRDSESKRLGMKVGAGQRVSTGSILVRQRGTKWHPSQNVGRG) form a disordered region.

The protein belongs to the bacterial ribosomal protein bL27 family.

The sequence is that of Large ribosomal subunit protein bL27 from Chlamydia caviae (strain ATCC VR-813 / DSM 19441 / 03DC25 / GPIC) (Chlamydophila caviae).